A 322-amino-acid chain; its full sequence is MIFSTLEHIFTHISFSIVSIVIIIHLITLLGNEIIKPYDSSEKGMIVTFLCLTGLLITRWIYSGHFPLSDLYESLIFLSWSFSLIHIVPYFKIRKNYLTEITASSTIFTQGFATSGLLTEIRKPTILVPALQSEWLIMHVSMMILSYAALLCGSLLSVALLVITFRKIFYSYKSNNFLKLNESFSFGEIQYKNERNNILKKNYFLSAKNYYKAQLIQQLDYWSYRVISLGFIFLTIGILSGAVWANEAWGSYWSWDPKETWAFITWIVFAIYLHIRTNKNFQGANSAIVATLGFLIIWICYFGVNLLGIGLHSYGSFTLTSS.

7 consecutive transmembrane segments (helical) span residues 9–29 (IFTHISFSIVSIVIIIHLITL), 44–64 (GMIVTFLCLTGLLITRWIYSG), 71–91 (LYESLIFLSWSFSLIHIVPYF), 143–163 (MILSYAALLCGSLLSVALLVI), 226–246 (VISLGFIFLTIGILSGAVWAN), 255–275 (WDPKETWAFITWIVFAIYLHI), and 287–307 (AIVATLGFLIIWICYFGVNLL).

Belongs to the CcmF/CycK/Ccl1/NrfE/CcsA family. In terms of assembly, may interact with Ccs1.

Its subcellular location is the plastid. It is found in the chloroplast thylakoid membrane. Required during biogenesis of c-type cytochromes (cytochrome c6 and cytochrome f) at the step of heme attachment. The sequence is that of Cytochrome c biogenesis protein CcsA from Lactuca sativa (Garden lettuce).